The chain runs to 372 residues: Probable dual-specificity RNA methyltransferase RlmN (372 aa).

The interval 1–20 (MTSLPLTPVNPDAPARRAAM) is disordered. The Proton acceptor role is filled by glutamate 112. A Radical SAM core domain is found at 118 to 357 (YPDRVTVCLS…STTVRDTRGR (240 aa)). A disulfide bond links cysteine 125 and cysteine 363. Residues cysteine 132, cysteine 136, and cysteine 139 each coordinate [4Fe-4S] cluster. S-adenosyl-L-methionine is bound by residues 187 to 188 (GE), serine 221, 244 to 246 (SLH), and asparagine 320. The active-site S-methylcysteine intermediate is the cysteine 363.

The protein belongs to the radical SAM superfamily. RlmN family. [4Fe-4S] cluster serves as cofactor.

Its subcellular location is the cytoplasm. It catalyses the reaction adenosine(2503) in 23S rRNA + 2 reduced [2Fe-2S]-[ferredoxin] + 2 S-adenosyl-L-methionine = 2-methyladenosine(2503) in 23S rRNA + 5'-deoxyadenosine + L-methionine + 2 oxidized [2Fe-2S]-[ferredoxin] + S-adenosyl-L-homocysteine. It carries out the reaction adenosine(37) in tRNA + 2 reduced [2Fe-2S]-[ferredoxin] + 2 S-adenosyl-L-methionine = 2-methyladenosine(37) in tRNA + 5'-deoxyadenosine + L-methionine + 2 oxidized [2Fe-2S]-[ferredoxin] + S-adenosyl-L-homocysteine. Specifically methylates position 2 of adenine 2503 in 23S rRNA and position 2 of adenine 37 in tRNAs. The polypeptide is Probable dual-specificity RNA methyltransferase RlmN (Salinispora tropica (strain ATCC BAA-916 / DSM 44818 / JCM 13857 / NBRC 105044 / CNB-440)).